A 163-amino-acid chain; its full sequence is Photosystem II extrinsic protein V (163 aa).

An N-terminal signal peptide occupies residues 1–26 (MLRKLILITVATVFFACQLLVNPVSA). Residues Cys-63, Cys-66, His-67, and His-118 each coordinate heme c.

This sequence belongs to the cytochrome c family. PsbV subfamily. In terms of assembly, PSII is composed of 1 copy each of membrane proteins PsbA, PsbB, PsbC, PsbD, PsbE, PsbF, PsbH, PsbI, PsbJ, PsbK, PsbL, PsbM, PsbT, PsbX, PsbY, PsbZ, Psb30/Ycf12, peripheral proteins PsbO, CyanoQ (PsbQ), PsbU, PsbV and a large number of cofactors. It forms dimeric complexes. The cofactor is heme c.

Its subcellular location is the cellular thylakoid membrane. Its function is as follows. One of the extrinsic, lumenal subunits of photosystem II (PSII). PSII is a light-driven water plastoquinone oxidoreductase, using light energy to abstract electrons from H(2)O, generating a proton gradient subsequently used for ATP formation. The extrinsic proteins stabilize the structure of photosystem II oxygen-evolving complex (OEC), the ion environment of oxygen evolution and protect the OEC against heat-induced inactivation. Low-potential cytochrome c that plays a role in the OEC of PSII. The polypeptide is Photosystem II extrinsic protein V (Aphanothece halophytica).